A 482-amino-acid chain; its full sequence is Major cardiolipin synthase ClsA (482 aa).

Transmembrane regions (helical) follow at residues Ile3–Ile23 and Trp34–Phe54. PLD phosphodiesterase domains are found at residues Leu217–Tyr244 and Asp395–Ser422. Residues His222, Lys224, Asp229, His400, Lys402, and Asp407 contribute to the active site.

This sequence belongs to the phospholipase D family. Cardiolipin synthase subfamily.

The protein localises to the cell membrane. The catalysed reaction is 2 a 1,2-diacyl-sn-glycero-3-phospho-(1'-sn-glycerol) = a cardiolipin + glycerol. In terms of biological role, catalyzes the reversible phosphatidyl group transfer from one phosphatidylglycerol molecule to another to form cardiolipin (CL) (diphosphatidylglycerol) and glycerol. This Bacillus subtilis (strain 168) protein is Major cardiolipin synthase ClsA (clsA).